Reading from the N-terminus, the 79-residue chain is UPF0180 protein BCAH187_A1552 (79 aa).

The protein belongs to the UPF0180 family.

The chain is UPF0180 protein BCAH187_A1552 from Bacillus cereus (strain AH187).